The chain runs to 337 residues: GTPase Obg (337 aa).

The Obg domain occupies 4–162 (SNFIDYVKVC…AWVILELKVL (159 aa)). The OBG-type G domain occupies 163-329 (ADVGLVGFPN…LKDLLWTTMN (167 aa)). GTP-binding positions include 169 to 176 (GFPNAGKS), 194 to 198 (FTTLA), 216 to 219 (DIPG), 283 to 286 (SKSD), and 310 to 312 (SSY). Ser176 and Thr196 together coordinate Mg(2+).

Belongs to the TRAFAC class OBG-HflX-like GTPase superfamily. OBG GTPase family. As to quaternary structure, monomer. Mg(2+) is required as a cofactor.

The protein localises to the cytoplasm. An essential GTPase which binds GTP, GDP and possibly (p)ppGpp with moderate affinity, with high nucleotide exchange rates and a fairly low GTP hydrolysis rate. Plays a role in control of the cell cycle, stress response, ribosome biogenesis and in those bacteria that undergo differentiation, in morphogenesis control. This chain is GTPase Obg, found in Cytophaga hutchinsonii (strain ATCC 33406 / DSM 1761 / CIP 103989 / NBRC 15051 / NCIMB 9469 / D465).